We begin with the raw amino-acid sequence, 792 residues long: Phenylalanine--tRNA ligase beta subunit (792 aa).

Residues 39-147 (GEALDLIVVA…DDAPIGTPLA (109 aa)) form the tRNA-binding domain. A B5 domain is found at 400–475 (PAPASILLRR…RIRGYEHLPT (76 aa)). Residues aspartate 453, aspartate 459, glutamate 462, and glutamate 463 each contribute to the Mg(2+) site. Residues 698–791 (SRFPFVRRDL…IQQRHDVRIR (94 aa)) form the FDX-ACB domain.

Belongs to the phenylalanyl-tRNA synthetase beta subunit family. Type 1 subfamily. In terms of assembly, tetramer of two alpha and two beta subunits. It depends on Mg(2+) as a cofactor.

Its subcellular location is the cytoplasm. It carries out the reaction tRNA(Phe) + L-phenylalanine + ATP = L-phenylalanyl-tRNA(Phe) + AMP + diphosphate + H(+). This chain is Phenylalanine--tRNA ligase beta subunit (pheT), found in Xylella fastidiosa (strain 9a5c).